The primary structure comprises 727 residues: DNA ligase (727 aa).

NAD(+) contacts are provided by residues 71–75 (DGEFD), 120–121 (SL), and Glu150. The N6-AMP-lysine intermediate role is filled by Lys152. NAD(+)-binding residues include Arg173, Glu213, Lys329, and Lys353. Positions 447, 450, 466, and 472 each coordinate Zn(2+). The 90-residue stretch at 636–725 (SIERHLTGLS…PEAAAEAALP (90 aa)) folds into the BRCT domain.

This sequence belongs to the NAD-dependent DNA ligase family. LigA subfamily. Mg(2+) serves as cofactor. It depends on Mn(2+) as a cofactor.

It catalyses the reaction NAD(+) + (deoxyribonucleotide)n-3'-hydroxyl + 5'-phospho-(deoxyribonucleotide)m = (deoxyribonucleotide)n+m + AMP + beta-nicotinamide D-nucleotide.. DNA ligase that catalyzes the formation of phosphodiester linkages between 5'-phosphoryl and 3'-hydroxyl groups in double-stranded DNA using NAD as a coenzyme and as the energy source for the reaction. It is essential for DNA replication and repair of damaged DNA. In Saccharopolyspora erythraea (strain ATCC 11635 / DSM 40517 / JCM 4748 / NBRC 13426 / NCIMB 8594 / NRRL 2338), this protein is DNA ligase.